Here is a 470-residue protein sequence, read N- to C-terminus: Zinc finger and BTB domain-containing protein 8A.1-A (470 aa).

Positions 24 to 92 (CDCHIIVEGQ…VYSGKLPLSG (69 aa)) constitute a BTB domain. The segment at 260–280 (EDEDAASHSWPESPQQESLDQ) is disordered. Over residues 269-278 (WPESPQQESL) the composition is skewed to polar residues. 2 C2H2-type zinc fingers span residues 316–338 (FKCP…LRCH) and 344–367 (YPCE…QTIH). The segment covering 439–450 (GRKENGSERAES) has biased composition (basic and acidic residues). Residues 439–470 (GRKENGSERAESDLAIQEVVDSEDDELKEKQD) form a disordered region.

The protein localises to the nucleus. May be involved in transcriptional regulation. The protein is Zinc finger and BTB domain-containing protein 8A.1-A (zbtb8a.1-a) of Xenopus laevis (African clawed frog).